A 234-amino-acid chain; its full sequence is Small ribosomal subunit protein uS2c (234 aa).

This sequence belongs to the universal ribosomal protein uS2 family.

It localises to the plastid. The protein localises to the chloroplast. The sequence is that of Small ribosomal subunit protein uS2c (rps2) from Pinus koraiensis (Korean pine).